Reading from the N-terminus, the 81-residue chain is N.vectensis toxin 4 (81 aa).

Residues 1-20 (MRSSWMFVICFAMLILYTNG) form the signal peptide. Disulfide bonds link Cys-46–Cys-75, Cys-48–Cys-70, and Cys-63–Cys-76.

In terms of tissue distribution, expressed in ectodermal gland cells. In adult female tissues, highly transcribed in mesenteries (gametes-producing tissue) and slightly transcribed in tentacles, pharynx and physa.

Its function is as follows. Has toxic effects on zebrafish larvae. It causes contractile paralysis and twitching of the tail within 30 minutes, followed by death within 40 minutes. Does not show any toxicity when injected into arthropods (cherry shrimps or grass shrimps). The protein is N.vectensis toxin 4 of Nematostella vectensis (Starlet sea anemone).